Consider the following 180-residue polypeptide: MDLEKLKEETQIIIDDVLKQTEIKSGQVFVLGLSSSEVNGGLIGHASSAEIGQVIVSVIHKTLSDKGIYLAVQACEHLNRALLIEEELADKKDWEIVSVVPQLHAGGSGQVAAYQLFKSPVEVEHIVAQAGLDIGDTSIGMHVKHVQIPVRPISKELGGAHVTSLKSRPKLIGGERARYE.

Belongs to the UPF0340 family.

This is UPF0340 protein LACR_0494 from Lactococcus lactis subsp. cremoris (strain SK11).